We begin with the raw amino-acid sequence, 372 residues long: High-affinity lysophosphatidic acid receptor (372 aa).

Topologically, residues 1 to 38 (MGCNNTALDNCMLPNLSIATAPLDLRFAFSTPLRMLLA) are extracellular. N-linked (GlcNAc...) asparagine glycosylation is found at N4 and N15. A helical membrane pass occupies residues 39–59 (IIMILMIAIAFLGNAIVCLIV). The Cytoplasmic segment spans residues 60–80 (YQKPAMRSAINLLLATLAFSD). The chain crosses the membrane as a helical span at residues 81–101 (IMLSLFCMPFTAVTIITGSWL). Over 102-108 (FGTQFCQ) the chain is Extracellular. The helical transmembrane segment at 109-129 (ISAMLYWFFVLEGVAILLIIS) threads the bilayer. Residues 130–149 (VDRFLIIVQRQDKLNPHRAK) lie on the Cytoplasmic side of the membrane. The helical transmembrane segment at 150-170 (IMIAASWVLSFCISLPSVVGW) threads the bilayer. Residues 171-198 (TLVEVPTRAPQCVLGYTEFSADRVYAVM) lie on the Extracellular side of the membrane. Residues 199–219 (LIVAVFFIPFSVMLYSYLCIL) traverse the membrane as a helical segment. Residues 220-268 (NTVRRNAVRIHTHADSLCLSQVSKLGLMGLQRPHQMNVDMSFKTRAFTT) lie on the Cytoplasmic side of the membrane. A helical transmembrane segment spans residues 269-289 (ILILFIGFSLCWLPHSVFSLL). The Extracellular segment spans residues 290–301 (SVFSRTFYYSSS). A helical transmembrane segment spans residues 302 to 324 (FYSISTCTLWLTYLKSVFNPVIY). The Cytoplasmic segment spans residues 325–372 (CWRIKKFREACLEFMPKTFKILPNVRGRTRRRIRPSTIYVCGEHQSAV).

This sequence belongs to the G-protein coupled receptor 1 family. Ubiquitously expressed.

Its subcellular location is the cell membrane. In terms of biological role, highly selective receptor for lysophosphatidic acid (LPA), a mediator of diverse cellular activities. The sequence is that of High-affinity lysophosphatidic acid receptor from Xenopus laevis (African clawed frog).